A 556-amino-acid polypeptide reads, in one-letter code: Putative cysteine ligase BshC (556 aa).

Coiled coils occupy residues 408–442 (ILQK…IAQA) and 468–513 (LGQV…ANLT).

It belongs to the BshC family.

Functionally, involved in bacillithiol (BSH) biosynthesis. May catalyze the last step of the pathway, the addition of cysteine to glucosamine malate (GlcN-Mal) to generate BSH. The sequence is that of Putative cysteine ligase BshC from Symbiobacterium thermophilum (strain DSM 24528 / JCM 14929 / IAM 14863 / T).